The following is a 662-amino-acid chain: MSDDMSMGLPSSAGEHGVLRSMQEVAMSSQEASKMLRTYNIAWWGNNYYDVNELGHISVCPDPDVPEARVDLAQLVKTREAQGQRLPALFCFPQILQHRLRSINAAFKRARESYGYNGDYFLVYPIKVNQHRRVIESLIHSGEPLGLEAGSKAELMAVLAHAGMTRSVIVCNGYKDREYIRLALIGEKMGHKVYLVIEKMSEIAIVLDEAERLNVVPRLGVRARLASQGSGKWQSSGGEKSKFGLAATQVLQLVETLREAGRLDSLQLLHFHLGSQMANIRDIATGVRESARFYVELHKLGVNIQCFDVGGGLGVDYEGTRSQSDCSVNYGLNEYANNIIWAIGDACEENGLPHPTVITESGRAVTAHHTVLVSNIIGVERNEYTVPTAPVEDAPRALQSMWETWQEMHEPGTRRSLREWLHDSQMDLHDIHIGYSSGTFSLQERAWAEQLYLSMCHEVQKQLDPQNRAHRPIIDELQERMADKMYVNFSLFQSMPDAWGIDQLFPVLPLEGLDQVPERRAVLLDITCDSDGAIDHYIDGDGIATTMPMPEYDPENPPMLGFFMVGAYQEILGNMHNLFGDTEAVDVFVFPDGSVEVELSDEGDTVADMLQYVQLDPKTLLTQFRDQVKKTDLDAELQQQFLEEFEAGLYGYTYLEDENLLI.

Lysine 127 is subject to N6-(pyridoxal phosphate)lysine. 307-317 (FDVGGGLGVDY) is a binding site for substrate.

The protein belongs to the Orn/Lys/Arg decarboxylase class-II family. SpeA subfamily. As to quaternary structure, homotetramer. Requires Mg(2+) as cofactor. Pyridoxal 5'-phosphate serves as cofactor.

The protein resides in the periplasm. The catalysed reaction is L-arginine + H(+) = agmatine + CO2. It participates in amine and polyamine biosynthesis; agmatine biosynthesis; agmatine from L-arginine: step 1/1. In terms of biological role, catalyzes the biosynthesis of agmatine from arginine. The sequence is that of Biosynthetic arginine decarboxylase from Shigella flexneri.